Here is a 375-residue protein sequence, read N- to C-terminus: Queuine tRNA-ribosyltransferase (375 aa).

The active-site Proton acceptor is the aspartate 89. Residues 89–93 (DSGGF), aspartate 143, glutamine 187, and glycine 214 contribute to the substrate site. Residues 245 to 251 (GVGKPED) are RNA binding. Aspartate 264 functions as the Nucleophile in the catalytic mechanism. Residues 269–273 (TRNAR) are RNA binding; important for wobble base 34 recognition. Residues cysteine 302, cysteine 304, cysteine 307, and histidine 333 each coordinate Zn(2+).

It belongs to the queuine tRNA-ribosyltransferase family. In terms of assembly, homodimer. Within each dimer, one monomer is responsible for RNA recognition and catalysis, while the other monomer binds to the replacement base PreQ1. Requires Zn(2+) as cofactor.

It catalyses the reaction 7-aminomethyl-7-carbaguanine + guanosine(34) in tRNA = 7-aminomethyl-7-carbaguanosine(34) in tRNA + guanine. It functions in the pathway tRNA modification; tRNA-queuosine biosynthesis. In terms of biological role, catalyzes the base-exchange of a guanine (G) residue with the queuine precursor 7-aminomethyl-7-deazaguanine (PreQ1) at position 34 (anticodon wobble position) in tRNAs with GU(N) anticodons (tRNA-Asp, -Asn, -His and -Tyr). Catalysis occurs through a double-displacement mechanism. The nucleophile active site attacks the C1' of nucleotide 34 to detach the guanine base from the RNA, forming a covalent enzyme-RNA intermediate. The proton acceptor active site deprotonates the incoming PreQ1, allowing a nucleophilic attack on the C1' of the ribose to form the product. After dissociation, two additional enzymatic reactions on the tRNA convert PreQ1 to queuine (Q), resulting in the hypermodified nucleoside queuosine (7-(((4,5-cis-dihydroxy-2-cyclopenten-1-yl)amino)methyl)-7-deazaguanosine). The chain is Queuine tRNA-ribosyltransferase from Klebsiella pneumoniae subsp. pneumoniae (strain ATCC 700721 / MGH 78578).